A 148-amino-acid polypeptide reads, in one-letter code: Lipid droplet organization protein LDO16 (148 aa).

Over 1-7 (MVSTATF) the chain is Cytoplasmic. The helical transmembrane segment at 8-28 (FFFVYLTLFVVIGFFSSLFII) threads the bilayer. P29 is a topological domain (lumenal). The helical transmembrane segment at 30 to 50 (LLGISFVFAIGVVSFGFCSNM) threads the bilayer. The Cytoplasmic portion of the chain corresponds to 51 to 148 (SFKMAQLIYV…NKAGNKFQLS (98 aa)). The segment at 83–110 (QEPQEPLSTLRPVSNPTIPSPLRQTARP) is disordered. Residues 93–109 (RPVSNPTIPSPLRQTAR) show a composition bias toward polar residues. S102 carries the post-translational modification Phosphoserine.

The protein belongs to the OSW5 family. Interacts specifically with the seipin complex FLD1-LDB16. Only a fraction appears to associate with the seipin core components, suggesting that it may be an ancillary subunit of the complex. Found to interact with many mitochondrial and peroxisomal proteins.

The protein localises to the endoplasmic reticulum membrane. It is found in the lipid droplet. Involved in lipid droplet (LD) organization. Functions primarily upon nutrient depletion, facilitating LD consumption by lipophagy. Required for correct LD distribution during entry into stationary phase, where LDs accumulate at nucleus-vacuole junction (NVJ) contact sites. Involved in membrane interaction in a manner similar to those of SNARE proteins, binding to partners present in mitochondria or peroxisomes. Its partner on the mitochondrion side might be TOM22, a mitochondrial outer membrane protein, linking lipid droplets and mitochondria by protein-protein interaction. Involved in spore wall assembly. This is Lipid droplet organization protein LDO16 from Saccharomyces cerevisiae (strain ATCC 204508 / S288c) (Baker's yeast).